Consider the following 581-residue polypeptide: Estrogen receptor (581 aa).

The modulating stretch occupies residues 1–144 (MYPEDSRVSG…GFEMAKEMRF (144 aa)). Disordered stretches follow at residues 45-66 (APLD…SGPN) and 99-123 (RSSV…DSYS). The span at 56–66 (GSLQSLGSGPN) shows a compositional bias: polar residues. Residues 142–217 (MRFCAVCSDY…VGMMKGGVRK (76 aa)) constitute a DNA-binding region (nuclear receptor). 2 consecutive NR C4-type zinc fingers follow at residues 145–165 (CAVC…CEGC) and 181–200 (CPAT…CQAC). The tract at residues 211–272 (MKGGVRKDRG…GGGKSSVISM (62 aa)) is hinge. Residues 216–246 (RKDRGRVLRRDKRRTGTSDRDKASKGLEHRT) are compositionally biased toward basic and acidic residues. The segment at 216–269 (RKDRGRVLRRDKRRTGTSDRDKASKGLEHRTAPPQDRRKHISSSAGGGGGKSSV) is disordered. The NR LBD domain occupies 273–509 (PPDQVLLLLR…DLLLEMLDAH (237 aa)). A compositionally biased stretch (basic and acidic residues) spans 514-528 (PDRPAETWSQADREP). The disordered stretch occupies residues 514 to 581 (PDRPAETWSQ…VHPHPMKPTE (68 aa)). Over residues 572-581 (VHPHPMKPTE) the composition is skewed to basic residues.

It belongs to the nuclear hormone receptor family. NR3 subfamily. As to quaternary structure, binds DNA as a homodimer. Can form a heterodimer with ER-beta.

The protein resides in the nucleus. The steroid hormones and their receptors are involved in the regulation of eukaryotic gene expression and affect cellular proliferation and differentiation in target tissues. This is Estrogen receptor (esr1) from Sparus aurata (Gilthead sea bream).